A 98-amino-acid chain; its full sequence is Small ribosomal subunit protein bS21B (98 aa).

Residues 61-98 (KLQREGLLPMKPKPVFGAGAGGERGGRGGPGAGPRGPR) are disordered. The segment covering 78–98 (AGAGGERGGRGGPGAGPRGPR) has biased composition (gly residues).

Belongs to the bacterial ribosomal protein bS21 family.

This chain is Small ribosomal subunit protein bS21B, found in Bradyrhizobium diazoefficiens (strain JCM 10833 / BCRC 13528 / IAM 13628 / NBRC 14792 / USDA 110).